The primary structure comprises 572 residues: Probable terpene synthase 13 (572 aa).

D326, D330, and E478 together coordinate Mg(2+). Positions 326-330 (DDIFD) match the DDXXD motif motif.

It belongs to the terpene synthase family. Mg(2+) serves as cofactor.

In terms of biological role, probable sesquiterpene synthase. This is Probable terpene synthase 13 (TPS13) from Ricinus communis (Castor bean).